The primary structure comprises 433 residues: Inward rectifier potassium channel 18 (433 aa).

Residues methionine 1–aspartate 77 lie on the Cytoplasmic side of the membrane. A helical membrane pass occupies residues isoleucine 78 to valine 104. Over isoleucine 105–glycine 129 the chain is Extracellular. The segment at residues phenylalanine 130 to tyrosine 146 is an intramembrane region (helical; Pore-forming). A Selectivity filter motif is present at residues threonine 143–leucine 148. Residues glycine 147–cysteine 155 are Extracellular-facing. A helical membrane pass occupies residues leucine 156 to lysine 183. Topologically, residues methionine 184 to isoleucine 433 are cytoplasmic. The interval aspartate 387 to isoleucine 433 is disordered. The segment covering glutamine 396–arginine 414 has biased composition (basic and acidic residues).

Belongs to the inward rectifier-type potassium channel (TC 1.A.2.1) family. KCNJ12 subfamily. In terms of assembly, can form heteromeric channels with Kir2.1/KCNJ2. Can form heteromeric channels with Kir2.2/KCNJ12. In terms of processing, probably phosphorylated by PKC; decreases single-channel open probability. As to expression, specifically expressed in skeletal muscle.

The protein resides in the cell membrane. It localises to the endoplasmic reticulum. It carries out the reaction K(+)(in) = K(+)(out). Functionally, inward rectifier potassium channels are characterized by a greater tendency to allow potassium to flow into the cell rather than out of it. Their voltage dependence is regulated by the concentration of extracellular potassium; as external potassium is raised, the voltage range of the channel opening shifts to more positive voltages. The inward rectification is mainly due to the blockage of outward current by internal magnesium. This chain is Inward rectifier potassium channel 18 (KCNJ18), found in Homo sapiens (Human).